The sequence spans 857 residues: ATP-dependent RNA helicase DDX24 (857 aa).

The segment at 61–179 is disordered; it reads NPSRLFSSEE…SPKLPKKSKK (119 aa). Phosphoserine is present on residues serine 80 and serine 92. The segment covering 152-161 has biased composition (basic residues); it reads PRKKKNKGKK. Serine 170 carries the phosphoserine modification. A Q motif motif is present at residues 193–221; it reads SAWRDLFVPKAVLRALSFLGFSAPTPIQA. In terms of domain architecture, Helicase ATP-binding spans 225–528; sequence APAIRDKLDI…RILHKKHVKK (304 aa). 238–245 is an ATP binding site; that stretch reads AETGSGKT. The tract at residues 279 to 363 is disordered; it reads RFGATAHLGS…NEDGEEKFDA (85 aa). Phosphoserine is present on residues serine 288 and serine 296. The segment covering 290 to 307 has biased composition (basic and acidic residues); sequence CKDRTESGVLPEEARIET. Polar residues predominate over residues 309–330; that stretch reads AQPSDSGVQATPETSASASAQT. Residues 345–363 show a composition bias toward basic and acidic residues; sequence LEEKPVPKQNEDGEEKFDA. Lysine 370 is covalently cross-linked (Glycyl lysine isopeptide (Lys-Gly) (interchain with G-Cter in SUMO2)). A DEAD box motif is present at residues 471–474; it reads DEAD. A Helicase C-terminal domain is found at 576 to 723; it reads DLYLYYFLMQ…LFPVQSKYMD (148 aa). Lysine 624 participates in a covalent cross-link: Glycyl lysine isopeptide (Lys-Gly) (interchain with G-Cter in SUMO2). The segment at 808–857 is disordered; it reads RYPTQSGRPPQPVLASRNIESALSCLSRQKRRRKKPKEPRAPPQPGSSTS. The span at 825 to 834 shows a compositional bias: polar residues; the sequence is NIESALSCLS. Basic residues predominate over residues 835-844; that stretch reads RQKRRRKKPK. Residues 848 to 857 show a composition bias toward pro residues; that stretch reads APPQPGSSTS.

It belongs to the DEAD box helicase family. DDX24/MAK5 subfamily. In terms of assembly, interacts with FADD. Interacts with RIPK1; this interaction disrupts RLR signaling activation of IFN-dependent transcription factor IRF7. Interacts with NIP7. Interacts with EP300; this interaction prevents TP53 acetylation mediated by EP300. In terms of processing, ubiquitinated by MDM2 without targeting DDX24 for proteasomal degradation. Instead, polyubiquitylated DDX24 promotes interaction with NIP7, a component of pre-rRNP processing complex, and associates with pre-rRNA molecules and pre-ribosomal particles.

The protein localises to the cytoplasm. It localises to the nucleus. It carries out the reaction ATP + H2O = ADP + phosphate + H(+). Functionally, ATP-dependent RNA helicase that plays a role in various aspects of RNA metabolism including pre-mRNA splicing and is thereby involved in different biological processes such as cell cycle regulation or innate immunity. Plays an inhibitory role in TP53 transcriptional activity and subsequently in TP53 controlled cell growth arrest and senescence by inhibiting its EP300 mediated acetylation. Negatively regulates cytosolic RNA-mediated innate immune signaling at least in part by affecting RIPK1/IRF7 interactions. Alternatively, possesses antiviral activity by recognizing gammaherpesvirus transcripts in the context of lytic reactivation. Plays an essential role in cell cycle regulation in vascular smooth muscle cells by interacting with and regulating FANCA (Fanconi anemia complementation group A) mRNA. The sequence is that of ATP-dependent RNA helicase DDX24 (Ddx24) from Mus musculus (Mouse).